The following is a 465-amino-acid chain: ATP-dependent rRNA helicase rrp3 (465 aa).

Basic and acidic residues predominate over residues 1 to 22 (MAPSEKKLTEDKKNSSLNKKIE). The disordered stretch occupies residues 1-44 (MAPSEKKLTEDKKNSSLNKKIETSNSSSEKSSENNNGDSQNNEA). Over residues 23–36 (TSNSSSEKSSENNN) the composition is skewed to low complexity. The Q motif motif lies at 46–74 (KTFKELGVIDELCEACEKLGFKTPTPIQQ). The region spanning 77-248 (IPVVLNKRDV…RASLHQPVRV (172 aa)) is the Helicase ATP-binding domain. An ATP-binding site is contributed by 90–97 (AQTGSGKT). Positions 196–199 (DEAD) match the DEAD box motif. The Helicase C-terminal domain maps to 275 to 419 (YLVYLVNELA…EYEIDKEGVF (145 aa)). A compositionally biased stretch (basic residues) spans 442–453 (RRKSKGKLHTKR). The segment at 442-465 (RRKSKGKLHTKRKRDDLDREEQIY) is disordered. Over residues 454-465 (KRDDLDREEQIY) the composition is skewed to basic and acidic residues.

The protein belongs to the DEAD box helicase family. DDX47/RRP3 subfamily. Interacts with the SSU processome.

It localises to the nucleus. It carries out the reaction ATP + H2O = ADP + phosphate + H(+). ATP-dependent rRNA helicase required for pre-ribosomal RNA processing. Involved in the maturation of the 35S-pre-rRNA and to its cleavage to mature 18S rRNA. This Schizosaccharomyces pombe (strain 972 / ATCC 24843) (Fission yeast) protein is ATP-dependent rRNA helicase rrp3.